Reading from the N-terminus, the 419-residue chain is MWGLLIFSVLLGGVLAKEDFVGHQVLRISVDDEAQVQKVKELEDLEHLQLDFWRGPARPGFPIDVRVPFPSIQAVKVFLEAHGIRYTIMIEDVQLLLDEEQEQMFASQGRARTTSTFNYATYHTLEEIYDFMDILVAEHPQLVSKLQIGSSYEGRPIYVLKFSTGGNNRPAIWIDTGIHSREWVTQASGVWFAKKITEDYGQDPAFTAILDNLDIFLEIVTNPDGFAFTHSENRMWRKTRSRTSGSFCVGVDPNRNWDAGFGGAGASSNPCSETYHGKFPNSEVEVKSIVDFVNDHGNIKAFISIHSYSQLLLYPYGYKTEAPADKDELDQISKSAVAALTSLYGTKFQYGSIITTIYQASGGTIDWTYNQGIKYSFSFELRDTGRYGFLLPASQIIPTAQETWLALLTIMEHTLNHPY.

The N-terminal stretch at 1–16 (MWGLLIFSVLLGGVLA) is a signal peptide. Residues 17-110 (KEDFVGHQVL…QEQMFASQGR (94 aa)) constitute a propeptide, activation peptide. Residues 121 to 414 (TYHTLEEIYD…LALLTIMEHT (294 aa)) enclose the Peptidase M14 domain. Residues His-179 and Glu-182 each coordinate Zn(2+). Residues 179–182 (HSRE), Arg-237, and 254–255 (NR) each bind substrate. Cys-248 and Cys-271 form a disulfide bridge. His-306 lines the Zn(2+) pocket. Substrate is bound by residues 307–308 (SY) and Tyr-358. Residue Glu-380 is the Proton donor/acceptor of the active site.

This sequence belongs to the peptidase M14 family. Monomer. May form a complex with proelastase 2. Zn(2+) serves as cofactor.

It localises to the secreted. The enzyme catalyses Release of a C-terminal amino acid, but little or no action with -Asp, -Glu, -Arg, -Lys or -Pro.. The catalysed reaction is leukotriene C4 + H2O = leukotriene F4 + glycine. In terms of biological role, carboxypeptidase that catalyzes the release of a C-terminal amino acid, but has little or no action with -Asp, -Glu, -Arg, -Lys or -Pro. Catalyzes the conversion of leukotriene C4 to leukotriene F4 via the hydrolysis of an amide bond. The protein is Carboxypeptidase A1 (CPA1) of Sus scrofa (Pig).